We begin with the raw amino-acid sequence, 103 residues long: Cobalt transport protein CbiN (103 aa).

Helical transmembrane passes span 6-26 and 68-88; these read VLTNVILLLLVVFITIIPFFV and LLFALQAAIGAGVIGFGLGYL.

This sequence belongs to the CbiN family. In terms of assembly, forms an energy-coupling factor (ECF) transporter complex composed of an ATP-binding protein (A component, CbiO), a transmembrane protein (T component, CbiQ) and 2 possible substrate-capture proteins (S components, CbiM and CbiN) of unknown stoichimetry.

Its subcellular location is the cell membrane. Its pathway is cofactor biosynthesis; adenosylcobalamin biosynthesis. Part of the energy-coupling factor (ECF) transporter complex CbiMNOQ involved in cobalt import. This Clostridium perfringens (strain 13 / Type A) protein is Cobalt transport protein CbiN.